Reading from the N-terminus, the 113-residue chain is Class I hydrophobin 1 (113 aa).

An N-terminal signal peptide occupies residues 1 to 17 (MQFKFLSTVALATLAVA). 4 disulfide bridges follow: cysteine 32/cysteine 92, cysteine 39/cysteine 86, cysteine 40/cysteine 73, and cysteine 93/cysteine 106.

This sequence belongs to the fungal hydrophobin family. As to quaternary structure, self-assembles to form functional amyloid fibrils called rodlets. Self-assembly into fibrillar rodlets occurs spontaneously at hydrophobic:hydrophilic interfaces and the rodlets further associate laterally to form amphipathic monolayers.

The protein resides in the secreted. It is found in the cell wall. Aerial growth, conidiation, and dispersal of filamentous fungi in the environment rely upon a capability of their secreting small amphipathic proteins called hydrophobins (HPBs) with low sequence identity. Class I can self-assemble into an outermost layer of rodlet bundles on aerial cell surfaces, conferring cellular hydrophobicity that supports fungal growth, development and dispersal; whereas Class II form highly ordered films at water-air interfaces through intermolecular interactions but contribute nothing to the rodlet structure. CoH1 is an asexual monokaryon-specific class I hydrophobin that is involved in aerial growth of mycelia. In Coprinopsis cinerea (Inky cap fungus), this protein is Class I hydrophobin 1.